The sequence spans 445 residues: MTEPLLSSAAPEMKMEETSSSSNLRQPKKRFVGRRTADAHAQKDASISSKDVESTSVQRVAPRRNPRTLNQVPPEILDDPEIQAAIELLPKNYSFEIPKTIHRIRTSGAKRVALQFPEGLLIFATTISDILTQFCPGTETLIMGDVTYGACCIDDYTARALGCDLLVHYAHSCLIPVDVTQIKTLYIFVDISIDTSHLIATLERNFQPGKTIATVGTIQFNATLHGLKPVLERAGFKVVIPQIAPLSKGEILGCTSPQLSPTEIDILLYLGDGRFHLESAMIHNPTIPAYRYDPYSRTLSRETYSHDEMHALRRDAINTAKSAKKWGIILGSLGRQGNPNTMAMIENHLNERGIPFVNLLLSEIFPGKLASMSDVECWVQIACPRLSIDWGYAFPRPLLTPYEALIALGVREHWDSANSGVYPMDFYAKEGLGRTKPQQALQGAA.

Positions 1–74 (MTEPLLSSAA…NPRTLNQVPP (74 aa)) are disordered. Residues 45–58 (ASISSKDVESTSVQ) are compositionally biased toward polar residues. Cysteine 151, cysteine 254, and cysteine 383 together coordinate [4Fe-4S] cluster.

The protein belongs to the DPH1/DPH2 family. DPH1 subfamily. Component of the 2-(3-amino-3-carboxypropyl)histidine synthase complex composed of DPH1, DPH2, DPH3 and a NADH-dependent reductase, predominantly CBR1. [4Fe-4S] cluster serves as cofactor.

Its subcellular location is the cytoplasm. The catalysed reaction is L-histidyl-[translation elongation factor 2] + S-adenosyl-L-methionine = 2-[(3S)-amino-3-carboxypropyl]-L-histidyl-[translation elongation factor 2] + S-methyl-5'-thioadenosine + H(+). It functions in the pathway protein modification; peptidyl-diphthamide biosynthesis. Its function is as follows. Catalyzes the first step of diphthamide biosynthesis, a post-translational modification of histidine which occurs in elongation factor 2. DPH1 and DPH2 transfer a 3-amino-3-carboxypropyl (ACP) group from S-adenosyl-L-methionine (SAM) to a histidine residue, the reaction is assisted by a reduction system comprising DPH3 and a NADH-dependent reductase, predominantly CBR1. This chain is 2-(3-amino-3-carboxypropyl)histidine synthase subunit 1 (dph1), found in Aspergillus fumigatus (strain ATCC MYA-4609 / CBS 101355 / FGSC A1100 / Af293) (Neosartorya fumigata).